The following is a 282-amino-acid chain: Secretory carrier-associated membrane protein 1 (282 aa).

Positions M1 to D49 are disordered. Topologically, residues M1–Q117 are cytoplasmic. Residues A18–L30 show a composition bias toward polar residues. The residue at position 31 (S31) is a Phosphoserine. The stretch at L48–N93 forms a coiled coil. Transmembrane regions (helical) follow at residues Y118–V138, I150–Y170, F185–A205, and I233–I253. Over Q254 to L282 the chain is Cytoplasmic.

This sequence belongs to the SCAMP family.

It localises to the cell membrane. The protein localises to the cytoplasmic vesicle. The protein resides in the secretory vesicle membrane. Probably involved in membrane trafficking. This is Secretory carrier-associated membrane protein 1 (SCAMP1) from Arabidopsis thaliana (Mouse-ear cress).